A 582-amino-acid polypeptide reads, in one-letter code: Multicopper oxidase LPR1 homolog 1 (582 aa).

An N-terminal signal peptide occupies residues 1–20; it reads MRAKVELAVLLLVLVGVAAG. Cu cation is bound by residues His150, His152, His198, and His200. 3 N-linked (GlcNAc...) asparagine glycosylation sites follow: Asn256, Asn300, and Asn308. In terms of domain architecture, Plastocyanin-like spans 285 to 354; sequence PFLAVARRRY…DVVVDFSQST (70 aa). The Cu cation site is built by His467, His470, and His472. The N-linked (GlcNAc...) asparagine glycan is linked to Asn504. Residues His563, Cys564, His565, His569, and Met574 each contribute to the Cu cation site.

Belongs to the multicopper oxidase family. Cu cation serves as cofactor. Highly expressed in roots, and at lower levels in basal stems and leaf blades.

It is found in the endoplasmic reticulum membrane. Functionally, multicopper oxidase that may play a role in the maintenance of inorganic phosphate homeostasis. The chain is Multicopper oxidase LPR1 homolog 1 from Oryza sativa subsp. japonica (Rice).